Here is a 361-residue protein sequence, read N- to C-terminus: Single-stranded DNA-binding protein 2 (361 aa).

N6-acetyllysine is present on K6. One can recognise a LisH domain in the interval 18–50; the sequence is AREKLALYVYEYLLHVGAQKSAQTFLSEIRWEK. 2 disordered regions span residues 147 to 171 and 194 to 361; these read GGVP…HPNM and GAMR…TMSV. The span at 204–219 shows a compositional bias: gly residues; it reads GGPGMPGMNMGPGGGR. The span at 225 to 236 shows a compositional bias: polar residues; sequence TNANSIPYSSAS. The span at 246–256 shows a compositional bias: pro residues; sequence GGGPPGTPIMP. Positions 289–299 are enriched in gly residues; the sequence is GSDGPMGGLGG. Residues 317–332 are compositionally biased toward polar residues; the sequence is ISKNSPNNMSLSNQPG. S321 is modified (phosphoserine). At T333 the chain carries Phosphothreonine. Over residues 346–361 the composition is skewed to polar residues; that stretch reads NPFQSESYSPSMTMSV.

Ubiquitous.

Its subcellular location is the nucleus. The chain is Single-stranded DNA-binding protein 2 (SSBP2) from Homo sapiens (Human).